Consider the following 400-residue polypeptide: Leucine-rich repeat flightless-interacting protein 2 (400 aa).

Disordered stretches follow at residues 1–28 (MGTP…SNID) and 53–119 (LERQ…LSEV). Phosphoserine is present on serine 18. The stretch at 29-71 (REAEARLAAKRAARAEARDIRMRELERQQKELDEKSDKQYAEN) forms a coiled coil. Basic and acidic residues predominate over residues 53–68 (LERQQKELDEKSDKQY). Polar residues predominate over residues 73–102 (TRPSSRNSASATTPLSGNSSRRVSGDTSSL). Serine 77, serine 80, serine 88, serine 92, and serine 96 each carry phosphoserine. Phosphothreonine is present on threonine 99. 2 positions are modified to phosphoserine: serine 100 and serine 101. 2 coiled-coil regions span residues 106-202 (DTSL…LIEK) and 245-393 (LDVR…KANR).

Belongs to the LRRFIP family. Interacts with DVL3 and FLII. Weakly interacts with MYD88 in resting cells. Following LPS-stimulation, the interaction with MYD88 is rapidly enhanced; the complex gradually dissociates to basal levels after 6 hours of stimulation. Interaction with MYD88 is regulated by LPS-induced phosphorylation. In the presence of LPS, competes with FLII for MYD88-binding.

May function as activator of the canonical Wnt signaling pathway, in association with DVL3, upstream of CTNNB1/beta-catenin. Positively regulates Toll-like receptor (TLR) signaling in response to agonist probably by competing with the negative FLII regulator for MYD88-binding. In Bos taurus (Bovine), this protein is Leucine-rich repeat flightless-interacting protein 2 (LRRFIP2).